The following is a 298-amino-acid chain: MNTDDFGSAGEQARILAHALPFMRRYAGATVVVKYGGHAMGDERLAEQFGADIALLKQVGINPVVVHGGGPQINDMLKRLAIQSRFVDGLRVTDAAMVEVVEMVLAGTVNKMVAGLINRAGAMAVGICGKDGGLIHARKLQRTAIDPDSHIEKALDLGFVGEPAHIDVRVIHALTGAGLIPVIAPVGIGEDGQTYNINADSAAGAIAGALGAKRLLMLTDVPGVLDTDKKLIPEMSAADVKAGIADGTITGGMIPKVECCVDAVEKGVRGAVILDGRQPHACLLEMFTEGGIGTLIRG.

Residues Gly69–Gly70, Arg91, and Asn196 contribute to the substrate site.

This sequence belongs to the acetylglutamate kinase family. ArgB subfamily.

It localises to the cytoplasm. It catalyses the reaction N-acetyl-L-glutamate + ATP = N-acetyl-L-glutamyl 5-phosphate + ADP. It functions in the pathway amino-acid biosynthesis; L-arginine biosynthesis; N(2)-acetyl-L-ornithine from L-glutamate: step 2/4. Its function is as follows. Catalyzes the ATP-dependent phosphorylation of N-acetyl-L-glutamate. This is Acetylglutamate kinase from Granulibacter bethesdensis (strain ATCC BAA-1260 / CGDNIH1).